A 911-amino-acid polypeptide reads, in one-letter code: MAQLFLPLLAALVLAQAPAALADVLEGDSSEDRAFRVRIAGDAPLQGVLGGALTIPCHVHYLRPPPSRRAVLGSPRVKWTFLSRGREAEVLVARGVRVKVNEAYRFRVALPAYPASLTDVSLALSELRPNDSGIYRCEVQHGIDDSSDAVEVKVKGVVFLYREGSARYAFSFSGAQEACARIGAHIATPEQLYAAYLGGYEQCDAGWLSDQTVRYPIQTPREACYGDMDGFPGVRNYGVVDPDDLYDVYCYAEDLNGELFLGDPPEKLTLEEARAYCQERGAEIATTGQLYAAWDGGLDHCSPGWLADGSVRYPIVTPSQRCGGGLPGVKTLFLFPNQTGFPNKHSRFNVYCFRDSAQPSAIPEASNPASNPASDGLEAIVTVTETLEELQLPQEATESESRGAIYSIPIMEDGGGGSSTPEDPAEAPRTLLEFETQSMVPPTGFSEEEGKALEEEEKYEDEEEKEEEEEEEEVEDEALWAWPSELSSPGPEASLPTEPAAQEESLSQAPARAVLQPGASPLPDGESEASRPPRVHGPPTETLPTPRERNLASPSPSTLVEAREVGEATGGPELSGVPRGESEETGSSEGAPSLLPATRAPEGTRELEAPSEDNSGRTAPAGTSVQAQPVLPTDSASRGGVAVVPASGDCVPSPCHNGGTCLEEEEGVRCLCLPGYGGDLCDVGLRFCNPGWDAFQGACYKHFSTRRSWEEAETQCRMYGAHLASISTPEEQDFINNRYREYQWIGLNDRTIEGDFLWSDGVPLLYENWNPGQPDSYFLSGENCVVMVWHDQGQWSDVPCNYHLSYTCKMGLVSCGPPPELPLAQVFGRPRLRYEVDTVLRYRCREGLAQRNLPLIRCQENGRWEAPQISCVPRRPARALHPEEDPEGRQGRLLGRWKALLIPPSSPMPGP.

A signal peptide spans 1-22 (MAQLFLPLLAALVLAQAPAALA). An Ig-like V-type domain is found at 36 to 155 (RVRIAGDAPL…SSDAVEVKVK (120 aa)). 5 disulfide bridges follow: Cys-57–Cys-137, Cys-179–Cys-250, Cys-203–Cys-224, Cys-277–Cys-352, and Cys-301–Cys-322. Asn-130 carries an N-linked (GlcNAc...) asparagine glycan. 2 Link domains span residues 157–252 (VVFL…YCYA) and 257–354 (GELF…YCFR). Residue Asn-337 is glycosylated (N-linked (GlcNAc...) asparagine). Residues 391-641 (QLPQEATESE…PTDSASRGGV (251 aa)) form a disordered region. A Phosphoserine modification is found at Ser-418. The O-linked (Xyl...) (chondroitin sulfate) serine glycan is linked to Ser-418. The span at 454–478 (EEEEKYEDEEEKEEEEEEEEVEDEA) shows a compositional bias: acidic residues. O-glycosylated at two sites regions lie at residues 520-530 (SPLPDGESEAS) and 540-545 (TETLPT). The segment at 569–575 (TGGPELS) is O-glycosylated at one site. A compositionally biased stretch (polar residues) spans 612–627 (EDNSGRTAPAGTSVQA). Ala-646 is lipidated: GPI-anchor amidated alanine. The 37-residue stretch at 646-682 (ASGDCVPSPCHNGGTCLEEEEGVRCLCLPGYGGDLCD) folds into the EGF-like domain. 8 disulfides stabilise this stretch: Cys-650-Cys-661, Cys-655-Cys-670, Cys-672-Cys-681, Cys-688-Cys-699, Cys-716-Cys-808, Cys-784-Cys-800, Cys-815-Cys-858, and Cys-844-Cys-871. One can recognise a C-type lectin domain in the interval 695-809 (FQGACYKHFS…CNYHLSYTCK (115 aa)). The Sushi domain occupies 813–873 (VSCGPPPELP…WEAPQISCVP (61 aa)). O-linked (GalNAc...) serine glycosylation is found at Ser-905 and Ser-906.

This sequence belongs to the aggrecan/versican proteoglycan family. As to quaternary structure, interacts with TNR. Post-translationally, O-glycosylated; contains chondroitin sulfate. O-glycosylated with a core 1 or possibly core 8 glycan. Expressed in the retina, specifically in the inner nuclear layer, inner plexiform layer and ganglion cell layer (at protein level). Detected in cerebrospinal fluid (at protein level). Detected in urine (at protein level).

It localises to the secreted. The protein localises to the extracellular space. Its subcellular location is the extracellular matrix. The protein resides in the membrane. May play a role in the terminally differentiating and the adult nervous system during postnatal development. Could stabilize interactions between hyaluronan (HA) and brain proteoglycans. This Homo sapiens (Human) protein is Brevican core protein (BCAN).